Consider the following 245-residue polypeptide: Probable 2-phosphosulfolactate phosphatase (245 aa).

This sequence belongs to the ComB family. Mg(2+) is required as a cofactor.

It catalyses the reaction (2R)-O-phospho-3-sulfolactate + H2O = (2R)-3-sulfolactate + phosphate. The chain is Probable 2-phosphosulfolactate phosphatase from Nostoc sp. (strain PCC 7120 / SAG 25.82 / UTEX 2576).